Consider the following 144-residue polypeptide: Large ribosomal subunit protein bL31c (144 aa).

The N-terminal 48 residues, 1–48 (MAVSLPNSFLQISPCVPSLQLRKPVMAAVKGGKQSVRRSSNTVVQITC), are a transit peptide targeting the chloroplast.

The protein belongs to the bacterial ribosomal protein bL31 family. Type A subfamily. Part of the 50S ribosomal subunit.

It is found in the plastid. The protein localises to the chloroplast. Its function is as follows. Binds the 23S rRNA. The polypeptide is Large ribosomal subunit protein bL31c (RPL31) (Arabidopsis thaliana (Mouse-ear cress)).